The primary structure comprises 414 residues: tRNA dimethylallyltransferase (414 aa).

Position 33–40 (alanine 33–threonine 40) interacts with ATP. Substrate is bound at residue threonine 35–threonine 40. 3 interaction with substrate tRNA regions span residues aspartate 58 to leucine 61, glutamine 182 to arginine 186, and arginine 266 to arginine 271.

It belongs to the IPP transferase family. Monomer. It depends on Mg(2+) as a cofactor.

It catalyses the reaction adenosine(37) in tRNA + dimethylallyl diphosphate = N(6)-dimethylallyladenosine(37) in tRNA + diphosphate. Its function is as follows. Catalyzes the transfer of a dimethylallyl group onto the adenine at position 37 in tRNAs that read codons beginning with uridine, leading to the formation of N6-(dimethylallyl)adenosine (i(6)A). The chain is tRNA dimethylallyltransferase from Psychrobacter cryohalolentis (strain ATCC BAA-1226 / DSM 17306 / VKM B-2378 / K5).